The primary structure comprises 280 residues: uncharacterized protein (280 aa).

2 disordered regions span residues 1–124 and 177–280; these read MPRD…QREA and LEEE…LSSK. Basic residues-rich tracts occupy residues 16–36 and 48–83; these read SRRR…RSRR and YSRR…RQKS. 2 stretches are compositionally biased toward basic and acidic residues: residues 102–124 and 182–259; these read AKNR…QREA and EASL…ERLK.

This is an uncharacterized protein from Arabidopsis thaliana (Mouse-ear cress).